The sequence spans 1607 residues: Putative molluscan insulin-related peptide(s) receptor (1607 aa).

Positions 1–35 (MHPGSISFNMIINKCIPICLFILFIMMMEFTVSKA) are cleaved as a signal peptide. Asparagine 82, asparagine 188, asparagine 245, asparagine 275, asparagine 332, asparagine 343, asparagine 495, asparagine 520, asparagine 663, asparagine 710, asparagine 778, asparagine 796, asparagine 802, asparagine 868, asparagine 879, asparagine 940, and asparagine 953 each carry an N-linked (GlcNAc...) asparagine glycan. Fibronectin type-III domains are found at residues 517–632 (HDLN…TYPF), 636–726 (EPTD…SKEE), and 756–861 (LPDE…TKDS). Residues 698 to 975 (EKVKIEEEGK…RPPDPESSNT (278 aa)) are Extracellular-facing. One can recognise a Fibronectin type-III 4 domain in the interval 870 to 967 (TTVDTEIETN…LERFFIVPRP (98 aa)). A helical transmembrane segment spans residues 976–996 (LLIVAIVLAFFGVLTVSLIVA). Residues 997–1607 (CVYYKQKIRS…WSTLKMVLVL (611 aa)) are Cytoplasmic-facing. Residues 1037–1308 (IKLIKELGQG…AIIEYLLPKL (272 aa)) enclose the Protein kinase domain. ATP contacts are provided by residues 1043 to 1051 (LGQGSFGMV) and lysine 1072. Aspartate 1173 (proton acceptor) is an active-site residue. Tyrosine 1199 is modified (phosphotyrosine; by autocatalysis). Disordered regions lie at residues 1328-1352 (GAGE…LSCE) and 1501-1539 (TLNG…SSSW). The segment covering 1503 to 1515 (NGNQSSHNNNSFE) has biased composition (polar residues). Residues 1524-1538 (SGPASESSNGVSSSS) show a composition bias toward low complexity.

The protein belongs to the protein kinase superfamily. Tyr protein kinase family. Insulin receptor subfamily. In terms of assembly, probable tetramer of 2 alpha and 2 beta chains linked by disulfide bonds. The alpha chains contribute to the formation of the ligand-binding domain, while the beta chains carry the kinase domain. It depends on Mn(2+) as a cofactor.

It localises to the membrane. The enzyme catalyses L-tyrosyl-[protein] + ATP = O-phospho-L-tyrosyl-[protein] + ADP + H(+). Functionally, this receptor probably binds to the four different molluscan insulin-related peptides and has a tyrosine-protein kinase activity. The protein is Putative molluscan insulin-related peptide(s) receptor of Lymnaea stagnalis (Great pond snail).